The chain runs to 132 residues: MALTLDIVTPERRVLSVTVDEVRAPGAAGGFGIRVNHEPFMTALEPGRLTYVEGGREHHYAIGGGFLQVAENRVIVLADTAEAAGDIDVERAKRAFQDAQDRLLRMTEQDEHHPAESARVKRAAARISVAGR.

It belongs to the ATPase epsilon chain family. As to quaternary structure, F-type ATPases have 2 components, CF(1) - the catalytic core - and CF(0) - the membrane proton channel. CF(1) has five subunits: alpha(3), beta(3), gamma(1), delta(1), epsilon(1). CF(0) has three main subunits: a, b and c.

The protein localises to the cell inner membrane. Functionally, produces ATP from ADP in the presence of a proton gradient across the membrane. The protein is ATP synthase epsilon chain of Anaeromyxobacter sp. (strain Fw109-5).